The chain runs to 342 residues: Probable dual-specificity RNA methyltransferase RlmN (342 aa).

Residue Glu91 is the Proton acceptor of the active site. The region spanning 97–327 is the Radical SAM core domain; the sequence is YKHGNSICVS…TTIRREMGAD (231 aa). Cysteines 104 and 332 form a disulfide. 3 residues coordinate [4Fe-4S] cluster: Cys111, Cys115, and Cys118. S-adenosyl-L-methionine is bound by residues 158–159, Ser190, 213–215, and Asn289; these read GE and SLH. The active-site S-methylcysteine intermediate is Cys332.

Belongs to the radical SAM superfamily. RlmN family. [4Fe-4S] cluster serves as cofactor.

It localises to the cytoplasm. The enzyme catalyses adenosine(2503) in 23S rRNA + 2 reduced [2Fe-2S]-[ferredoxin] + 2 S-adenosyl-L-methionine = 2-methyladenosine(2503) in 23S rRNA + 5'-deoxyadenosine + L-methionine + 2 oxidized [2Fe-2S]-[ferredoxin] + S-adenosyl-L-homocysteine. The catalysed reaction is adenosine(37) in tRNA + 2 reduced [2Fe-2S]-[ferredoxin] + 2 S-adenosyl-L-methionine = 2-methyladenosine(37) in tRNA + 5'-deoxyadenosine + L-methionine + 2 oxidized [2Fe-2S]-[ferredoxin] + S-adenosyl-L-homocysteine. In terms of biological role, specifically methylates position 2 of adenine 2503 in 23S rRNA and position 2 of adenine 37 in tRNAs. The sequence is that of Probable dual-specificity RNA methyltransferase RlmN from Clostridium botulinum (strain Langeland / NCTC 10281 / Type F).